A 142-amino-acid polypeptide reads, in one-letter code: Hemoglobin subunit alpha-2 (142 aa).

Residues valine 2–arginine 142 form the Globin domain. Residue histidine 59 coordinates O2. Histidine 88 lines the heme b pocket.

It belongs to the globin family. Heterotetramer of two alpha chains and two beta chains.

Its function is as follows. Involved in oxygen transport from the lung to the various peripheral tissues. Hemopressin acts as an antagonist peptide of the cannabinoid receptor CNR1. Hemopressin-binding efficiently blocks cannabinoid receptor CNR1 and subsequent signaling. This is Hemoglobin subunit alpha-2 (HBA2) from Capra hircus (Goat).